The chain runs to 431 residues: Trigger factor (431 aa).

Residues 165–250 (TDTAVFDFEG…LHQIKTKKIP (86 aa)) enclose the PPIase FKBP-type domain.

It belongs to the FKBP-type PPIase family. Tig subfamily.

It localises to the cytoplasm. The enzyme catalyses [protein]-peptidylproline (omega=180) = [protein]-peptidylproline (omega=0). Functionally, involved in protein export. Acts as a chaperone by maintaining the newly synthesized protein in an open conformation. Functions as a peptidyl-prolyl cis-trans isomerase. The protein is Trigger factor of Aster yellows witches'-broom phytoplasma (strain AYWB).